An 884-amino-acid chain; its full sequence is Bifunctional heparan sulfate N-deacetylase/N-sulfotransferase 2 (884 aa).

Topologically, residues 1–18 are cytoplasmic; sequence MLKLWKVVRPARQLELHR. The chain crosses the membrane as a helical; Signal-anchor for type II membrane protein span at residues 19 to 39; sequence LILLLIAFSLGSMGFLAYYVS. Residues 40-884 lie on the Lumenal side of the membrane; it reads TSPKAKEPLP…REELQHSSSG (845 aa). Residues 41 to 598 are heparan sulfate N-deacetylase 2; the sequence is SPKAKEPLPL…KRHKDIWSKE (558 aa). Residues 49-82 form a disordered region; that stretch reads PLPLGDCSSSGAAGGPGPVRPPVPPRPPRPPETA. Over residues 66 to 79 the composition is skewed to pro residues; the sequence is PVRPPVPPRPPRPP. Residues Asn351 and Asn401 are each glycosylated (N-linked (GlcNAc...) asparagine). The interval 599 to 884 is heparan sulfate N-sulfotransferase 2; that stretch reads KTCDRLPKFL…REELQHSSSG (286 aa). Lys614 functions as the For sulfotransferase activity in the catalytic mechanism. Position 614-618 (614-618) interacts with 3'-phosphoadenylyl sulfate; the sequence is KTGTT. Asn667 carries N-linked (GlcNAc...) asparagine glycosylation. Residue Ser712 coordinates 3'-phosphoadenylyl sulfate. N-linked (GlcNAc...) asparagine glycosylation is found at Asn727 and Asn803. Cys818 and Cys828 form a disulfide bridge. A 3'-phosphoadenylyl sulfate-binding site is contributed by 833-837; that stretch reads KGRKY.

This sequence belongs to the sulfotransferase 1 family. NDST subfamily. In terms of assembly, monomer.

Its subcellular location is the golgi apparatus membrane. The catalysed reaction is alpha-D-glucosaminyl-[heparan sulfate](n) + 3'-phosphoadenylyl sulfate = N-sulfo-alpha-D-glucosaminyl-[heparan sulfate](n) + adenosine 3',5'-bisphosphate + 2 H(+). It participates in glycan metabolism; heparan sulfate biosynthesis. It functions in the pathway glycan metabolism; heparin biosynthesis. In terms of biological role, essential bifunctional enzyme that catalyzes both the N-deacetylation and the N-sulfation of glucosamine (GlcNAc) of the glycosaminoglycan in heparan sulfate. Modifies the GlcNAc-GlcA disaccharide repeating sugar backbone to make N-sulfated heparosan, a prerequisite substrate for later modifications in heparin biosynthesis. Plays a role in determining the extent and pattern of sulfation of heparan sulfate. Required for the exosomal release of SDCBP, CD63 and syndecan. In Bos taurus (Bovine), this protein is Bifunctional heparan sulfate N-deacetylase/N-sulfotransferase 2 (NDST2).